Consider the following 362-residue polypeptide: Peptide chain release factor 2 (362 aa).

Glutamine 250 bears the N5-methylglutamine mark.

This sequence belongs to the prokaryotic/mitochondrial release factor family. Post-translationally, methylated by PrmC. Methylation increases the termination efficiency of RF2.

The protein localises to the cytoplasm. Peptide chain release factor 2 directs the termination of translation in response to the peptide chain termination codons UGA and UAA. This is Peptide chain release factor 2 from Clostridium perfringens (strain ATCC 13124 / DSM 756 / JCM 1290 / NCIMB 6125 / NCTC 8237 / Type A).